Reading from the N-terminus, the 237-residue chain is 7-cyano-7-deazaguanine synthase (237 aa).

15-25 (LSGGMDSTVCA) provides a ligand contact to ATP. Residues Cys197, Cys205, Cys208, and Cys211 each contribute to the Zn(2+) site.

This sequence belongs to the QueC family. Zn(2+) serves as cofactor.

It carries out the reaction 7-carboxy-7-deazaguanine + NH4(+) + ATP = 7-cyano-7-deazaguanine + ADP + phosphate + H2O + H(+). Its pathway is purine metabolism; 7-cyano-7-deazaguanine biosynthesis. Catalyzes the ATP-dependent conversion of 7-carboxy-7-deazaguanine (CDG) to 7-cyano-7-deazaguanine (preQ(0)). This chain is 7-cyano-7-deazaguanine synthase, found in Koribacter versatilis (strain Ellin345).